The following is a 410-amino-acid chain: Platelet-activating factor acetylhydrolase IB subunit alpha (410 aa).

The required for self-association and interaction with PAFAH1B2 and PAFAH1B3 stretch occupies residues 1–38 (MVLSQRQRDELNRAIADYLRSNGYEEAYSVFKKEAELD). Positions 1-66 (MVLSQRQRDE…SVIRLQKKVM (66 aa)) are interaction with NDE1. Positions 1–102 (MVLSQRQRDE…EWIPRPPEKY (102 aa)) are interaction with NDEL1. In terms of domain architecture, LisH spans 7-39 (QRDELNRAIADYLRSNGYEEAYSVFKKEAELDM). Position 53 is an N6-acetyllysine (Lys-53). Positions 56–82 (TSVIRLQKKVMELESKLNEAKEEFTSG) form a coiled coil. An interaction with dynein and dynactin region spans residues 83–410 (GPLGQKRDPK…DQTVKVWECR (328 aa)). WD repeat units follow at residues 106–147 (GHRS…RTLK), 148–187 (GHTD…CIRT), 190–229 (GHDH…CVKT), 232–271 (GHRE…CKAE), 274–333 (EHEH…CLMT), 336–377 (GHDN…KTLN), and 378–410 (AHEH…WECR). Ser-109 carries the phosphoserine modification. The segment at 367–409 (YKNKRCMKTLNAHEHFVTSLDFHKTAPYVVTGSVDQTVKVWEC) is interaction with DCX. The interaction with NDEL1 stretch occupies residues 388 to 410 (FHKTAPYVVTGSVDQTVKVWECR).

It belongs to the WD repeat LIS1/nudF family. Can self-associate. Component of the cytosolic PAF-AH (I) heterotetrameric enzyme, which is composed of PAFAH1B1 (beta), PAFAH1B2 (alpha2) and PAFAH1B3 (alpha1) subunits. The catalytic activity of the enzyme resides in the alpha1 (PAFAH1B3) and alpha2 (PAFAH1B2) subunits, whereas the beta subunit (PAFAH1B1) has regulatory activity. Trimer formation is not essential for the catalytic activity. Interacts with the catalytic dimer of PAF-AH (I) heterotetrameric enzyme: interacts with PAFAH1B2 homodimer (alpha2/alpha2 homodimer), PAFAH1B3 homodimer (alpha1/alpha1 homodimer) and PAFAH1B2-PAFAH1B3 heterodimer (alpha2/alpha1 heterodimer). Interacts with DCX, dynein, dynactin, IQGAP1, KATNB1, NDE1, NDEL1, NUDC and RSN. Interacts with DISC1, and this interaction is enhanced by NDEL1. Interacts with DAB1 when DAB1 is phosphorylated in response to RELN/reelin signaling. Interacts with INTS13. Interacts with DCDC1.

Its subcellular location is the cytoplasm. The protein localises to the cytoskeleton. It localises to the microtubule organizing center. The protein resides in the centrosome. It is found in the spindle. Its subcellular location is the nucleus membrane. Functionally, regulatory subunit (beta subunit) of the cytosolic type I platelet-activating factor (PAF) acetylhydrolase (PAF-AH (I)), an enzyme that catalyzes the hydrolyze of the acetyl group at the sn-2 position of PAF and its analogs and participates in PAF inactivation. Regulates the PAF-AH (I) activity in a catalytic dimer composition-dependent manner. Positively regulates the activity of the minus-end directed microtubule motor protein dynein. May enhance dynein-mediated microtubule sliding by targeting dynein to the microtubule plus end. Required for several dynein- and microtubule-dependent processes such as the maintenance of Golgi integrity, the peripheral transport of microtubule fragments and the coupling of the nucleus and centrosome. Required during brain development for the proliferation of neuronal precursors and the migration of newly formed neurons from the ventricular/subventricular zone toward the cortical plate. Neuronal migration involves a process called nucleokinesis, whereby migrating cells extend an anterior process into which the nucleus subsequently translocates. During nucleokinesis dynein at the nuclear surface may translocate the nucleus towards the centrosome by exerting force on centrosomal microtubules. Also required for proper activation of Rho GTPases and actin polymerization at the leading edge of locomoting cerebellar neurons and postmigratory hippocampal neurons in response to calcium influx triggered via NMDA receptors. May also play a role in other forms of cell locomotion including the migration of fibroblasts during wound healing. Required for dynein recruitment to microtubule plus ends and BICD2-bound cargos. May modulate the Reelin pathway through interaction of the PAF-AH (I) catalytic dimer with VLDLR. The protein is Platelet-activating factor acetylhydrolase IB subunit alpha of Sus scrofa (Pig).